Consider the following 391-residue polypeptide: DNA-directed RNA polymerase subunit Rpo1C (391 aa).

This sequence belongs to the RNA polymerase beta' chain family. In terms of assembly, part of the RNA polymerase complex.

Its subcellular location is the cytoplasm. The protein localises to the chromosome. The catalysed reaction is RNA(n) + a ribonucleoside 5'-triphosphate = RNA(n+1) + diphosphate. Functionally, DNA-dependent RNA polymerase (RNAP) catalyzes the transcription of DNA into RNA using the four ribonucleoside triphosphates as substrates. Forms part of the jaw domain. In Thermococcus kodakarensis (strain ATCC BAA-918 / JCM 12380 / KOD1) (Pyrococcus kodakaraensis (strain KOD1)), this protein is DNA-directed RNA polymerase subunit Rpo1C.